The chain runs to 1365 residues: Serine/threonine-protein kinase LMTK1 (1365 aa).

A helical membrane pass occupies residues 32–52 (LAVVAVSFSGIFTVVILMLAC). The region spanning 126-396 (LLYLKEIGHG…PTAEEVHLLL (271 aa)) is the Protein kinase domain. ATP contacts are provided by residues 132–140 (IGHGWFGKV) and Lys-157. The active-site Proton acceptor is the Asp-254. Ser-500 is modified (phosphoserine). Disordered stretches follow at residues 550-623 (PDCA…LPAE), 638-698 (DDPL…GYVS), 791-1186 (QEAE…PAVP), 1237-1293 (ESPT…EWDG), and 1343-1365 (ISDS…YTEA). Residues 560–575 (QAVTDQDNNSEESTVA) show a composition bias toward polar residues. Low complexity-rich tracts occupy residues 638–655 (DDPL…QPSP) and 675–686 (SSNMSANNNSAS). 2 stretches are compositionally biased toward polar residues: residues 848–860 (LESS…QEAP) and 869–879 (EATSGVFTDLS). Low complexity-rich tracts occupy residues 904-918 (PDSL…SASD) and 981-993 (PLLS…LSKK). Residues 1015 to 1030 (PEKHSGIQDSQKEQDL) show a composition bias toward basic and acidic residues. The residue at position 1035 (Ser-1035) is a Phosphoserine. The span at 1037–1053 (GHQSVQAFPRSAVSSEV) shows a compositional bias: polar residues. Over residues 1072 to 1083 (PLGAQGPVGVQP) the composition is skewed to low complexity. Over residues 1104 to 1132 (GSGTEPQGPSGQLSGRAQQGQMGNPSTPR) the composition is skewed to polar residues. Acidic residues predominate over residues 1150-1164 (PEEDEDTEDSEESDE). Thr-1156 carries the phosphothreonine modification. Residues Ser-1159, Ser-1162, Ser-1175, Ser-1178, and Ser-1253 each carry the phosphoserine modification. Residues 1354–1365 (PAAGAGGRYTEA) show a composition bias toward gly residues.

It belongs to the protein kinase superfamily. Tyr protein kinase family. In terms of assembly, interacts with CDK5. Autophosphorylated. Phosphorylated by CDK5. Expressed in brain, and, to a lower extent, in kidney, heart, lung and skeletal muscle. In the brain, expressed in the olfactory bulb, cerebellum, striatum, hippocampal formation, thalamus, hypothalamus, and pontine nuclei (at protein level).

It localises to the membrane. The protein localises to the cytoplasm. The protein resides in the perinuclear region. It is found in the cell projection. Its subcellular location is the dendrite. It localises to the axon. The protein localises to the growth cone. It catalyses the reaction L-seryl-[protein] + ATP = O-phospho-L-seryl-[protein] + ADP + H(+). The enzyme catalyses L-threonyl-[protein] + ATP = O-phospho-L-threonyl-[protein] + ADP + H(+). In terms of biological role, may be involved in neuronal differentiation. This is Serine/threonine-protein kinase LMTK1 (Aatk) from Mus musculus (Mouse).